A 48-amino-acid polypeptide reads, in one-letter code: Entericidin B (48 aa).

The N-terminal stretch at 1 to 21 (MVKKTIAAIFSVLVLSTVLTA) is a signal peptide. A lipid anchor (N-palmitoyl cysteine) is attached at Cys-22. Cys-22 is lipidated: S-diacylglycerol cysteine.

The protein belongs to the EcnA/EcnB lipoprotein family.

The protein resides in the cell membrane. Functionally, plays a role in the bacteriolysis. Is activated under conditions of high osmolarity by the factor sigma S. Entericidin A functions as an antidote. In Escherichia coli O157:H7, this protein is Entericidin B (ecnB).